We begin with the raw amino-acid sequence, 378 residues long: Glutamate 5-kinase (378 aa).

Lys19 lines the ATP pocket. The substrate site is built by Ser59, Asp146, and Asn158. Residues 178–179 (TD) and 220–226 (TGGMATK) each bind ATP. Positions 285–363 (QGQIQVDAGA…GEIGEILGYK (79 aa)) constitute a PUA domain.

This sequence belongs to the glutamate 5-kinase family.

Its subcellular location is the cytoplasm. It carries out the reaction L-glutamate + ATP = L-glutamyl 5-phosphate + ADP. It functions in the pathway amino-acid biosynthesis; L-proline biosynthesis; L-glutamate 5-semialdehyde from L-glutamate: step 1/2. In terms of biological role, catalyzes the transfer of a phosphate group to glutamate to form L-glutamate 5-phosphate. The polypeptide is Glutamate 5-kinase (Moorella thermoacetica (strain ATCC 39073 / JCM 9320)).